The sequence spans 268 residues: Orotidine 5'-phosphate decarboxylase (268 aa).

Residues Asp-37, 59–61 (KTH), 91–100 (DRKFADIGNT), Tyr-217, and Arg-235 each bind substrate. Lys-93 serves as the catalytic Proton donor.

The protein belongs to the OMP decarboxylase family.

It carries out the reaction orotidine 5'-phosphate + H(+) = UMP + CO2. The protein operates within pyrimidine metabolism; UMP biosynthesis via de novo pathway; UMP from orotate: step 2/2. In Maudiozyma exigua (Yeast), this protein is Orotidine 5'-phosphate decarboxylase (URA4).